Here is a 221-residue protein sequence, read N- to C-terminus: MSLNNLNKKENFISIQLLSENWAEELRLSIKGYQKGFIKINSGALPLTCKDINELKRICNGVGMEIISIESTNAESIVSASALGLNANLKLKDNVFTEVKSDFKDLSESKVNAALLFHKGTLRSGEVLEADEDILILGDVNPGATVLAGGNVMIWGRLLGIAHAGKYGNNQAKITALQLRPVQLRIANKIARGPKEKPELGLAEEATIQEEVIVIKPARTT.

The protein belongs to the MinC family. As to quaternary structure, interacts with MinD and FtsZ.

Cell division inhibitor that blocks the formation of polar Z ring septums. Rapidly oscillates between the poles of the cell to destabilize FtsZ filaments that have formed before they mature into polar Z rings. Prevents FtsZ polymerization. The chain is Probable septum site-determining protein MinC from Prochlorococcus marinus (strain SARG / CCMP1375 / SS120).